We begin with the raw amino-acid sequence, 136 residues long: Probable disulfide formation protein (136 aa).

Residues 7–26 (NNALYFAWLICSTGTVMSIY) form a helical membrane-spanning segment. Cys-36 and Cys-39 are joined by a disulfide. 2 helical membrane passes run 41-60 (YQRI…TYRE) and 67-84 (YALP…YQIC). Cysteines 96 and 101 form a disulfide. The chain crosses the membrane as a helical span at residues 109 to 133 (GFITVPMASALAFCAISCLLILSGS).

It belongs to the DsbB family. BdbC subfamily.

The protein localises to the cell inner membrane. Its function is as follows. Required for disulfide bond formation in some proteins. The protein is Probable disulfide formation protein of Chlamydia caviae (strain ATCC VR-813 / DSM 19441 / 03DC25 / GPIC) (Chlamydophila caviae).